The primary structure comprises 292 residues: Small ribosomal subunit biogenesis GTPase RsgA (292 aa).

One can recognise a CP-type G domain in the interval 65-223 (KTELIRPTVA…VVDTPGFSSL (159 aa)). GTP contacts are provided by residues 114-117 (NKLD) and 165-173 (GPSGVGKST). Residues Cys247, Cys252, His254, and Cys260 each coordinate Zn(2+).

It belongs to the TRAFAC class YlqF/YawG GTPase family. RsgA subfamily. Monomer. Associates with 30S ribosomal subunit, binds 16S rRNA. Zn(2+) is required as a cofactor.

It localises to the cytoplasm. In terms of biological role, one of several proteins that assist in the late maturation steps of the functional core of the 30S ribosomal subunit. Helps release RbfA from mature subunits. May play a role in the assembly of ribosomal proteins into the subunit. Circularly permuted GTPase that catalyzes slow GTP hydrolysis, GTPase activity is stimulated by the 30S ribosomal subunit. The sequence is that of Small ribosomal subunit biogenesis GTPase RsgA from Alkaliphilus metalliredigens (strain QYMF).